The primary structure comprises 308 residues: Paired box protein 3 homolog (308 aa).

A DNA-binding region (paired) is located at residues 13 to 140 (GQGRVNQLGG…PAIKRLIGNK (128 aa)). The tract at residues 16–72 (RVNQLGGVFINGRPLPIHVRHAIISMAKKGIKPCHISRQLKVSHGAVSKILNRYAET) is PAI subdomain. Residues 92-140 (AVEKEILIACDENPQMSAAELRDWLIHKDICTKGNAPTVPAIKRLIGNK) are RED subdomain. Residues 168-191 (CSKSSSDDEEGSSPSNDASSRRNR) form a disordered region. The segment at residues 187–246 (SRRNRTSFTAEQLDVLENAFRADTYPHANARESISKETGLSEEKIMTWFSNRRARCRKNM) is a DNA-binding region (homeobox).

The protein belongs to the paired homeobox family.

The protein resides in the nucleus. Transcriptional activator. Regulates the lateral/ventral epidermal cell fate decision. This chain is Paired box protein 3 homolog, found in Caenorhabditis elegans.